Here is a 206-residue protein sequence, read N- to C-terminus: Large ribosomal subunit protein uL22m (206 aa).

Residues 1–40 constitute a mitochondrion transit peptide; it reads MAAAVLGQLGALWIHNLRSRGKLALGVLPQSYIHTSASLD.

This sequence belongs to the universal ribosomal protein uL22 family. Component of the mitochondrial large ribosomal subunit (mt-LSU). Mature mammalian 55S mitochondrial ribosomes consist of a small (28S) and a large (39S) subunit. The 28S small subunit contains a 12S ribosomal RNA (12S mt-rRNA) and 30 different proteins. The 39S large subunit contains a 16S rRNA (16S mt-rRNA), a copy of mitochondrial valine transfer RNA (mt-tRNA(Val)), which plays an integral structural role, and 52 different proteins.

It is found in the mitochondrion. This chain is Large ribosomal subunit protein uL22m (MRPL22), found in Homo sapiens (Human).